We begin with the raw amino-acid sequence, 397 residues long: MSNSLVLVINSGSSSLKFALIDTVSGEATLNGIGECFGLADANVSWKIDGKKHEFQLSDNGNHHKQAIDRIVALLEEQGIKQDIVAVGHRVVHGGEKFTQTVKIDETVLQEIENLSDLAPLHNPAHVVGMRAAIAAFPALSQYAVFDTAFHQTMPAKAFTGAISSKLYDDYGIRRYGFHGTSHYFVSREAAKVINKPIEKSSFISVHLGNGASVCAIKDGQSVDTSMGFTPLSGLMMGTRCGDLDPGIIEFLLKKGWSTEQVFKELNSNSGFLGVSGLTSDCRGVIEAMEEGHAGATLAFEIFTYRVAKYIASYMVALDELDGIIFTGGIGENSLPIRRQILKSLKIFGYREDEVANADARFGKGGVITQANTPIAMVIPTNEEWVIAKESMALLHA.

Asn10 is a binding site for Mg(2+). Lys17 provides a ligand contact to ATP. Arg90 serves as a coordination point for substrate. The active-site Proton donor/acceptor is the Asp147. ATP is bound by residues 207–211 (HLGNG), 281–283 (DCR), and 329–333 (GIGEN). Glu383 is a Mg(2+) binding site.

It belongs to the acetokinase family. Homodimer. Requires Mg(2+) as cofactor. Mn(2+) is required as a cofactor.

The protein localises to the cytoplasm. The enzyme catalyses acetate + ATP = acetyl phosphate + ADP. Its pathway is metabolic intermediate biosynthesis; acetyl-CoA biosynthesis; acetyl-CoA from acetate: step 1/2. Catalyzes the formation of acetyl phosphate from acetate and ATP. Can also catalyze the reverse reaction. This is Acetate kinase 2 from Photobacterium profundum (strain SS9).